A 281-amino-acid chain; its full sequence is uncharacterized protein (281 aa).

A signal peptide spans 1–23 (MKLYRSLKAALLPGICTSILLAS). Residue Cys24 is the site of N-palmitoyl cysteine attachment. Cys24 carries S-diacylglycerol cysteine lipidation. Residues 145 to 165 (HHDHNHMHNHEHEHEEHHDEE) are disordered. Positions 150 to 161 (HMHNHEHEHEEH) are enriched in basic and acidic residues.

Its subcellular location is the cell membrane. This is an uncharacterized protein from Mycoplasma genitalium (strain ATCC 33530 / DSM 19775 / NCTC 10195 / G37) (Mycoplasmoides genitalium).